The sequence spans 338 residues: Very-long-chain 3-oxoacyl-CoA reductase (338 aa).

The chain crosses the membrane as a helical span at residues 20–40; sequence LSAFLLVMGSIGVGRVIYQTL. NADP(+)-binding residues include V66, N95, D120, N147, Y214, K218, V247, and S249. Y214 acts as the Proton donor in catalysis. K218 functions as the Lowers pKa of active site Tyr in the catalytic mechanism.

The protein belongs to the short-chain dehydrogenases/reductases (SDR) family.

It localises to the endoplasmic reticulum membrane. It catalyses the reaction a very-long-chain (3R)-3-hydroxyacyl-CoA + NADP(+) = a very-long-chain 3-oxoacyl-CoA + NADPH + H(+). It functions in the pathway lipid metabolism; fatty acid biosynthesis. Its function is as follows. Component of the microsomal membrane bound fatty acid elongation system, which produces the 26-carbon very long-chain fatty acids (VLCFA) from palmitate. Catalyzes the reduction of the 3-ketoacyl-CoA intermediate that is formed in each cycle of fatty acid elongation. VLCFAs serve as precursors for ceramide and sphingolipids. In Laccaria bicolor (strain S238N-H82 / ATCC MYA-4686) (Bicoloured deceiver), this protein is Very-long-chain 3-oxoacyl-CoA reductase.